The following is a 1225-amino-acid chain: uncharacterized protein (1225 aa).

Positions 1–15 are enriched in polar residues; it reads MSSQAEPSKGASNAD. The tract at residues 1 to 104 is disordered; sequence MSSQAEPSKG…VDGVPTRPVS (104 aa). Residues 16-25 are compositionally biased toward basic and acidic residues; it reads PNEKVEKMHL. Residues 43–65 are compositionally biased toward polar residues; it reads ASPSDKNNLNPQSAGVSEVQVQD. The helical transmembrane segment at 167 to 187 threads the bilayer; the sequence is FLFGYLRFGFLSLFIIMAVCI. The SMP-LTD domain maps to 217–422; it reads DSETVTWLNT…SPNVYELDIE (206 aa). C2 domains are found at residues 413–534, 559–668, and 685–803; these read SPNV…NDAF, DSGE…LLWF, and KPAQ…GALM. S843 bears the Phosphoserine mark. The disordered stretch occupies residues 867-890; the sequence is PESQKTPTAVDNTSTSRGSTSVKT. Over residues 869-890 the composition is skewed to polar residues; that stretch reads SQKTPTAVDNTSTSRGSTSVKT. The C2 4 domain occupies 1019–1137; it reads RLTPVPVKLE…QQQQQTNYEI (119 aa). The Ca(2+) site is built by D1053, D1059, D1107, D1109, and D1115.

Ca(2+) is required as a cofactor.

It localises to the endoplasmic reticulum membrane. This is an uncharacterized protein from Schizosaccharomyces pombe (strain 972 / ATCC 24843) (Fission yeast).